The chain runs to 481 residues: Eukaryotic translation initiation factor 3 subunit L (481 aa).

Residues 1 to 22 (MSVDARTAYPGSRPPANMQDES) are disordered. The PCI domain occupies 262–457 (DAIRTFSHIL…DLDYAIEGNL (196 aa)).

It belongs to the eIF-3 subunit L family. In terms of assembly, component of the eukaryotic translation initiation factor 3 (eIF-3) complex.

It localises to the cytoplasm. Its function is as follows. Component of the eukaryotic translation initiation factor 3 (eIF-3) complex, which is involved in protein synthesis of a specialized repertoire of mRNAs and, together with other initiation factors, stimulates binding of mRNA and methionyl-tRNAi to the 40S ribosome. The eIF-3 complex specifically targets and initiates translation of a subset of mRNAs involved in cell proliferation. In Coccidioides immitis (strain RS) (Valley fever fungus), this protein is Eukaryotic translation initiation factor 3 subunit L.